Reading from the N-terminus, the 155-residue chain is Protein Smg homolog (155 aa).

It belongs to the Smg family.

This Methylococcus capsulatus (strain ATCC 33009 / NCIMB 11132 / Bath) protein is Protein Smg homolog.